Reading from the N-terminus, the 241-residue chain is Proteasome subunit alpha (241 aa).

The protein belongs to the peptidase T1A family. In terms of assembly, the 20S proteasome core is composed of 14 alpha and 14 beta subunits that assemble into four stacked heptameric rings, resulting in a barrel-shaped structure. The two inner rings, each composed of seven catalytic beta subunits, are sandwiched by two outer rings, each composed of seven alpha subunits. The catalytic chamber with the active sites is on the inside of the barrel. Has a gated structure, the ends of the cylinder being occluded by the N-termini of the alpha-subunits. Is capped at one or both ends by the proteasome regulatory ATPase, PAN.

The protein resides in the cytoplasm. With respect to regulation, the formation of the proteasomal ATPase PAN-20S proteasome complex, via the docking of the C-termini of PAN into the intersubunit pockets in the alpha-rings, triggers opening of the gate for substrate entry. Interconversion between the open-gate and close-gate conformations leads to a dynamic regulation of the 20S proteasome proteolysis activity. Functionally, component of the proteasome core, a large protease complex with broad specificity involved in protein degradation. The sequence is that of Proteasome subunit alpha from Saccharolobus solfataricus (strain ATCC 35092 / DSM 1617 / JCM 11322 / P2) (Sulfolobus solfataricus).